A 59-amino-acid chain; its full sequence is Large ribosomal subunit protein uL30 (59 aa).

Belongs to the universal ribosomal protein uL30 family. In terms of assembly, part of the 50S ribosomal subunit.

This is Large ribosomal subunit protein uL30 from Proteus mirabilis (strain HI4320).